A 443-amino-acid polypeptide reads, in one-letter code: MSTTPNIGFISLGCPKNLVDSERILTELRTDGYNIIPSYENADLVIVNTCGFIDSAVQESLEAIGEALEENGKVIVTGCLGAKENQIREVHPKVLEITGPHSYEAVMKHVHKYVPRPERNIYTSLVPAQGVKLTPKHYAYLKISEGCDHRCTFCIIPSMRGDLDSRPIVQVLDEAKRLADSGVKELLIVSQDTSAYALDQSKENQNKTVFWNGAPIKNNLITLCEQLGSLGIWVRLHYVYPYPHVDDLIPLMAQGKILPYLDIPLQHASPKVLKAMKRPGAIDRTLERIKKWREICPKLTLRSTFIVGFPGETEEDFQMLLDFLEEAQLDRVGCFKFSPVEGAVATEMADQVPEDVKEERFHRFMQVQQRISAARLQQKVGKTLAVIIDEIDEEGIIGRSMADAPEIDGVVYVDNLSEQEVKVGQVISVSITNADEYDLWGTC.

One can recognise an MTTase N-terminal domain in the interval 5-115 (PNIGFISLGC…VMKHVHKYVP (111 aa)). Residues Cys14, Cys50, Cys79, Cys147, Cys151, and Cys154 each contribute to the [4Fe-4S] cluster site. In terms of domain architecture, Radical SAM core spans 133–374 (LTPKHYAYLK…MQVQQRISAA (242 aa)). The TRAM domain occupies 377-443 (QQKVGKTLAV…ADEYDLWGTC (67 aa)).

The protein belongs to the methylthiotransferase family. RimO subfamily. [4Fe-4S] cluster is required as a cofactor.

Its subcellular location is the cytoplasm. It catalyses the reaction L-aspartate(89)-[ribosomal protein uS12]-hydrogen + (sulfur carrier)-SH + AH2 + 2 S-adenosyl-L-methionine = 3-methylsulfanyl-L-aspartate(89)-[ribosomal protein uS12]-hydrogen + (sulfur carrier)-H + 5'-deoxyadenosine + L-methionine + A + S-adenosyl-L-homocysteine + 2 H(+). Its function is as follows. Catalyzes the methylthiolation of an aspartic acid residue of ribosomal protein uS12. The chain is Ribosomal protein uS12 methylthiotransferase RimO from Actinobacillus pleuropneumoniae serotype 5b (strain L20).